Reading from the N-terminus, the 64-residue chain is Chassatide C7 (64 aa).

The propeptide at 1 to 35 is removed in mature form; the sequence is VLVASLVMLEAQSSDTIQVPDWGKRLLMNHDSNRV. Cystine bridges form between Cys39–Cys55, Cys43–Cys57, and Cys48–Cys62.

In terms of tissue distribution, expressed in fruit, pedicel, root and stem but not in leaf (at protein level).

In terms of biological role, probably participates in a plant defense mechanism. Active against E.coli ATTC25922 but not against S.aureus ATCC 12600 or S.epidermidis ATCC 14990. Has cytotoxic and hemolytic activity. The polypeptide is Chassatide C7 (Chassalia chartacea (Chassalia curviflora)).